The following is a 415-amino-acid chain: Serine hydroxymethyltransferase (415 aa).

(6S)-5,6,7,8-tetrahydrofolate is bound by residues Leu120 and 124–126 (GHL). Lys229 is modified (N6-(pyridoxal phosphate)lysine).

The protein belongs to the SHMT family. As to quaternary structure, homodimer. Requires pyridoxal 5'-phosphate as cofactor.

Its subcellular location is the cytoplasm. The catalysed reaction is (6R)-5,10-methylene-5,6,7,8-tetrahydrofolate + glycine + H2O = (6S)-5,6,7,8-tetrahydrofolate + L-serine. Its pathway is one-carbon metabolism; tetrahydrofolate interconversion. The protein operates within amino-acid biosynthesis; glycine biosynthesis; glycine from L-serine: step 1/1. In terms of biological role, catalyzes the reversible interconversion of serine and glycine with tetrahydrofolate (THF) serving as the one-carbon carrier. This reaction serves as the major source of one-carbon groups required for the biosynthesis of purines, thymidylate, methionine, and other important biomolecules. Also exhibits THF-independent aldolase activity toward beta-hydroxyamino acids, producing glycine and aldehydes, via a retro-aldol mechanism. The chain is Serine hydroxymethyltransferase from Desulforudis audaxviator (strain MP104C).